The chain runs to 1408 residues: Palladin (1408 aa).

The interval 69–229 (SKSPISLCET…SASQSPTADQ (161 aa)) is disordered. 2 stretches are compositionally biased toward polar residues: residues 149–169 (PNPSSKPKTAQQSKAGPQSQL) and 193–229 (RSPNGESSSPDSGYLSPKNQPSALMSASASQSPTADQ). Phosphoserine is present on Ser-194. 2 Ig-like C2-type domains span residues 278–367 (PRFI…AEVF) and 448–546 (PVFT…LVIT). 2 disulfide bridges follow: Cys-299–Cys-351 and Cys-469–Cys-528. The interval 569 to 573 (FPPPP) is interaction with VASP. Disordered stretches follow at residues 631 to 660 (NGKAYGNKSPPTPTALLSPTKEPPPLLAKP) and 687 to 727 (PPGV…VPSE). At Ser-639 the chain carries Phosphoserine. Phosphothreonine is present on Thr-642. Ser-648 is modified (phosphoserine). Residues 653 to 683 (PPPLLAKPKLDPLKLQQLQNQVRLEQEACAW) form an interaction with LASP1 region. Residues 683–713 (WPPAPPGVPCNSSSSGSSAPPSPPFPPPPPA) are interaction with SORBS2, SPIN90 and SRC. Positions 691–701 (PCNSSSSGSSA) are enriched in low complexity. A phosphoserine mark is found at Ser-700, Ser-704, and Ser-744. Residues 702–714 (PPSPPFPPPPPAF) show a composition bias toward pro residues. 3 disordered regions span residues 758–854 (NLGP…RFGP), 882–904 (KGVTPAGFPKKSSRTARIASDEE), and 960–981 (ETAANQDAGAPRASVGGPLDGQ). Positions 765–779 (LPTPTSSPSSSSLPS) are enriched in low complexity. 3 stretches are compositionally biased toward pro residues: residues 780-797 (PLSPTPRPFGRAPGPPFV), 807-818 (SPSPPPPPPPVF), and 828-840 (DVFPLPPPPPPLP). The segment at 782–842 (SPTPRPFGRA…PPPPPPLPSS (61 aa)) is interaction with EPS8. The tract at residues 807–842 (SPSPPPPPPPVFSPSAAYPVPDVFPLPPPPPPLPSS) is interaction with SORBS2, SPIN90, SRC and PFN1. The segment at 830-834 (FPLPP) is interaction with VASP. Residue Ser-901 is modified to Phosphoserine. Phosphoserine occurs at positions 1004 and 1009. The region spanning 1026–1110 (PFFEMKLKHY…MAANPQGRVS (85 aa)) is the Ig-like C2-type 3 domain. The disordered stretch occupies residues 1121-1150 (NQRGRSPRSPSGHPHARRPRSRSRDSGDEN). Low complexity predominate over residues 1123–1133 (RGRSPRSPSGH). 4 positions are modified to phosphoserine: Ser-1126, Ser-1129, Ser-1131, and Ser-1141. Ser-1143 carries the phosphoserine; by PKB/AKT1 modification. A Phosphoserine modification is found at Ser-1146. Ig-like C2-type domains lie at 1160-1251 (PHFL…LVVA) and 1259-1349 (PVFM…ARLD). 2 interaction with EZR regions span residues 1162-1251 (FLQA…LVVA) and 1261-1351 (FMEK…LDVY). Cys-1181 and Cys-1233 are oxidised to a cystine. Position 1377 is a phosphoserine (Ser-1377).

Belongs to the myotilin/palladin family. As to quaternary structure, interacts with EPS8. Interacts with LASP1. Interacts with VASP. Interacts with ACTN. Interacts with SORBS2. Interacts with PFN1. Interacts with LPP. Interacts with SPIN90. Interacts with SRC. Interacts with EZR. Interacts with RAI14. In terms of processing, phosphorylated predominantly on serines and, to a lesser extent, on tyrosines. Phosphorylation at Ser-1143 by PKB/AKT1 modulates cytoskeletal organization and cell motility. Detected in both muscle and non-muscle tissues and cells (at protein level). Isoform 3 is widely expressed, isoform 4 is particularly abundant in tissues rich in smooth muscle and in the cardiac muscle and isoform 1 is detected in heart.

Its subcellular location is the cytoplasm. It localises to the cytoskeleton. The protein localises to the cell junction. It is found in the focal adhesion. The protein resides in the myofibril. Its subcellular location is the sarcomere. It localises to the z line. The protein localises to the cell projection. It is found in the ruffle. The protein resides in the podosome. Its subcellular location is the lamellipodium. It localises to the axon. The protein localises to the growth cone. Its function is as follows. Cytoskeletal protein required for organization of normal actin cytoskeleton. Roles in establishing cell morphology, motility, cell adhesion and cell-extracellular matrix interactions in a variety of cell types. May function as a scaffolding molecule with the potential to influence both actin polymerization and the assembly of existing actin filaments into higher-order arrays. Binds to proteins that bind to either monomeric or filamentous actin. Localizes at sites where active actin remodeling takes place, such as lamellipodia and membrane ruffles. Different isoforms may have functional differences. Involved in the control of morphological and cytoskeletal changes associated with dendritic cell maturation. Involved in targeting ACTN to specific subcellular locations. May be required for the initiation of neural tube closure. The sequence is that of Palladin (Palld) from Mus musculus (Mouse).